The chain runs to 445 residues: Rab GDP dissociation inhibitor beta (445 aa).

Met-1 carries the N-acetylmethionine modification. Lys-57 is subject to N6-succinyllysine. Lys-112 is subject to N6-acetyllysine. At Ser-130 the chain carries Phosphoserine. Residue Lys-269 is modified to N6-acetyllysine. A Phosphoserine modification is found at Ser-382.

It belongs to the Rab GDI family. As to quaternary structure, interacts with RHOH. Interacts with the GDP-bound inactive forms of RAB3A, RAB3B, RAB3C, RAB5A, RAB5B, RAB5C, RAB8A, RAB8B, RAB10, RAB12, RAB35, and RAB43; binds RAB3D to a lesser extent. Interacts with DZIP1; this interaction negatively regulates the interaction of GDI2 with GDP-bound RAB8A. As to expression, ubiquitously expressed.

It is found in the cytoplasm. The protein resides in the membrane. It localises to the golgi apparatus. The protein localises to the trans-Golgi network. In terms of biological role, GDP-dissociation inhibitor preventing the GDP to GTP exchange of most Rab proteins. By keeping these small GTPases in their inactive GDP-bound form regulates intracellular membrane trafficking. Negatively regulates protein transport to the cilium and ciliogenesis through the inhibition of RAB8A. The chain is Rab GDP dissociation inhibitor beta (GDI2) from Bos taurus (Bovine).